The following is a 623-amino-acid chain: DNA-directed RNA polymerase subunit beta' (623 aa).

Residues Cys70, Cys72, Cys85, and Cys88 each contribute to the Zn(2+) site. Residues Asp466, Asp468, and Asp470 each coordinate Mg(2+).

It belongs to the RNA polymerase beta' chain family. RpoC1 subfamily. In terms of assembly, in plastids the minimal PEP RNA polymerase catalytic core is composed of four subunits: alpha, beta, beta', and beta''. When a (nuclear-encoded) sigma factor is associated with the core the holoenzyme is formed, which can initiate transcription. Requires Mg(2+) as cofactor. Zn(2+) serves as cofactor.

It is found in the plastid. It localises to the chloroplast. It catalyses the reaction RNA(n) + a ribonucleoside 5'-triphosphate = RNA(n+1) + diphosphate. In terms of biological role, DNA-dependent RNA polymerase catalyzes the transcription of DNA into RNA using the four ribonucleoside triphosphates as substrates. The polypeptide is DNA-directed RNA polymerase subunit beta' (Guillardia theta (Cryptophyte)).